We begin with the raw amino-acid sequence, 112 residues long: MAEDIEEIRKKKLLELQKRYLEQQKAQEEAIRQEMELEAQLNAIMRHILTPEARERLGRVKLVRPELARQVELVLVQLYQAGQIREPIDDAKLKKILAQIDARTRRDFRIKW.

This sequence belongs to the PDCD5 family.

The sequence is that of DNA-binding protein TON_1102 from Thermococcus onnurineus (strain NA1).